Here is a 203-residue protein sequence, read N- to C-terminus: Acireductone dioxygenase 3 (203 aa).

Residues His-96, His-98, Glu-102, and His-141 each coordinate Fe(2+). 4 residues coordinate Ni(2+): His-96, His-98, Glu-102, and His-141.

Belongs to the acireductone dioxygenase (ARD) family. Requires Fe(2+) as cofactor. Ni(2+) serves as cofactor.

Its subcellular location is the cytoplasm. It is found in the nucleus. It catalyses the reaction 1,2-dihydroxy-5-(methylsulfanyl)pent-1-en-3-one + O2 = 4-methylsulfanyl-2-oxobutanoate + formate + 2 H(+). The catalysed reaction is 1,2-dihydroxy-5-(methylsulfanyl)pent-1-en-3-one + O2 = 3-(methylsulfanyl)propanoate + CO + formate + 2 H(+). The protein operates within amino-acid biosynthesis; L-methionine biosynthesis via salvage pathway; L-methionine from S-methyl-5-thio-alpha-D-ribose 1-phosphate: step 5/6. Functionally, catalyzes 2 different reactions between oxygen and the acireductone 1,2-dihydroxy-3-keto-5-methylthiopentene (DHK-MTPene) depending upon the metal bound in the active site. Fe-containing acireductone dioxygenase (Fe-ARD) produces formate and 2-keto-4-methylthiobutyrate (KMTB), the alpha-ketoacid precursor of methionine in the methionine recycle pathway. Ni-containing acireductone dioxygenase (Ni-ARD) produces methylthiopropionate, carbon monoxide and formate, and does not lie on the methionine recycle pathway. This is Acireductone dioxygenase 3 from Physcomitrium patens (Spreading-leaved earth moss).